The sequence spans 292 residues: Elongation factor Ts (292 aa).

The tract at residues 79 to 82 is involved in Mg(2+) ion dislocation from EF-Tu; sequence TDFV.

This sequence belongs to the EF-Ts family.

It localises to the cytoplasm. Associates with the EF-Tu.GDP complex and induces the exchange of GDP to GTP. It remains bound to the aminoacyl-tRNA.EF-Tu.GTP complex up to the GTP hydrolysis stage on the ribosome. The protein is Elongation factor Ts of Malacoplasma penetrans (strain HF-2) (Mycoplasma penetrans).